The primary structure comprises 523 residues: Light-independent protochlorophyllide reductase subunit B (523 aa).

Residue D36 coordinates [4Fe-4S] cluster. D290 serves as the catalytic Proton donor. Residue 425 to 426 participates in substrate binding; that stretch reads GL.

The protein belongs to the ChlB/BchB/BchZ family. In terms of assembly, protochlorophyllide reductase is composed of three subunits; ChlL, ChlN and ChlB. Forms a heterotetramer of two ChlB and two ChlN subunits. The cofactor is [4Fe-4S] cluster.

It carries out the reaction chlorophyllide a + oxidized 2[4Fe-4S]-[ferredoxin] + 2 ADP + 2 phosphate = protochlorophyllide a + reduced 2[4Fe-4S]-[ferredoxin] + 2 ATP + 2 H2O. It functions in the pathway porphyrin-containing compound metabolism; chlorophyll biosynthesis (light-independent). Functionally, component of the dark-operative protochlorophyllide reductase (DPOR) that uses Mg-ATP and reduced ferredoxin to reduce ring D of protochlorophyllide (Pchlide) to form chlorophyllide a (Chlide). This reaction is light-independent. The NB-protein (ChlN-ChlB) is the catalytic component of the complex. This Prochlorococcus marinus (strain MIT 9215) protein is Light-independent protochlorophyllide reductase subunit B.